Reading from the N-terminus, the 909-residue chain is Tubulin polyglutamylase TTLL7 (909 aa).

Residues 40–392 (NGAITANVVG…RASDKKKNLA (353 aa)) enclose the TTL domain. ATP-binding positions include lysine 162, 168 to 169 (MG), 190 to 193 (QEYL), and 203 to 205 (KFD). Arginine 229 is an L-glutamate binding site. 251 to 252 (TN) lines the ATP pocket. The L-glutamate site is built by tyrosine 253, serine 254, and lysine 273. 3 residues coordinate Mg(2+): aspartate 338, glutamate 351, and asparagine 353. Residue lysine 369 coordinates L-glutamate. Residues 390–452 (NLAKQKAEAQ…ISREEYENRH (63 aa)) form a c-MTBD region region. Disordered stretches follow at residues 517 to 580 (DEKL…KVSY) and 603 to 688 (KAAR…PSIS). A compositionally biased stretch (basic and acidic residues) spans 518–531 (EKLSGKPTRPKEPR). Residues 532 to 542 (TLSSMPESTQT) are compositionally biased toward polar residues. Positions 548-562 (NYSSHSSSNSTGSSS) are enriched in low complexity. Residues 571-580 (KEGKEKKVSY) show a composition bias toward basic and acidic residues. Over residues 604 to 625 (AARPFSNSSSPSSAASMRRSVS) the composition is skewed to low complexity. Residues 626-657 (CPRSITALNTQSPTTDQRPFSSRISSTITRPL) are compositionally biased toward polar residues. The segment covering 658 to 673 (SGNRTNSLNRSSSSNR) has biased composition (low complexity). The span at 674-688 (VPQSGTSGSVYPSIS) shows a compositional bias: polar residues.

The protein belongs to the tubulin--tyrosine ligase family. As to quaternary structure, interacts with both alpha- and beta-tubulin (via C-terminal tubulin tails). Requires Mg(2+) as cofactor.

The protein resides in the cell projection. The protein localises to the cilium. It localises to the cytoplasm. It is found in the cytoskeleton. Its subcellular location is the cilium basal body. The protein resides in the dendrite. The protein localises to the perikaryon. It catalyses the reaction L-glutamyl-[protein] + L-glutamate + ATP = gamma-L-glutamyl-L-glutamyl-[protein] + ADP + phosphate + H(+). The enzyme catalyses (L-glutamyl)(n)-gamma-L-glutamyl-L-glutamyl-[protein] + L-glutamate + ATP = (L-glutamyl)(n+1)-gamma-L-glutamyl-L-glutamyl-[protein] + ADP + phosphate + H(+). In terms of biological role, polyglutamylase which modifies tubulin, generating polyglutamate side chains of variable lengths on the gamma-carboxyl group of specific glutamate residues within the C-terminal tail of tubulin. Mediates both ATP-dependent initiation and elongation steps of the polyglutamylation reaction. Preferentially modifies the beta-tubulin tail over an alpha-tail. Competes with monoglycylase TTLL3 for modification site on beta-tubulin substrate, thereby creating an anticorrelation between glycylation and glutamylation reactions. The polypeptide is Tubulin polyglutamylase TTLL7 (Xenopus tropicalis (Western clawed frog)).